Consider the following 783-residue polypeptide: MHWKFSNFRKYHLSFHLNLFDLSLFFISFYCFPILYICFFNQVHSFRSTQPSLIMNKFDLFDDYSTKGSTIPLPNENFDQLFLSSEANDMEFLFNETLMGLQDLDVPSGYGIPQNTINNDFQHTPNKSKSHSRQYSGTAIFGFADHNKDLSINGVNNDLCKQSNKAINTQSVSPGELLKRSRGSQTPTPTSALPDTAQDILDFNFEEKPILLLEEDELEEEKHKQQQRMMTQSSPLKRVTTPSQSPFVQQPQTMKQRKPHKKTNEYIVANENPNSYKFPPSPSPTAKRQQYPPSSPIPYNPKSDSVGGNSYSAKYLQSLNKTQQIEYVDDIEPLLQEDNNNMKYIPIPVQEPMSYQKQKPVTPPLQSQNDSQQLEPLKTPQPQPKQQQQQQQPNNEQDKEFTANFNFNTFLPPPTPPNLINGSPDWNSSPEPHSPSPGRLQPPQQISPIHQNLGAMGNNINFYTPMYYELPVQAEQPQPQPQPHQQQHQQQQHQPELQNTYQQIKHIQQQQQMLQHQFHNQNNQLRQQHPNQFQNQNQNQNQNQTKTPYSQQSQFSPTHSNFNLSPAKQLNSNVGSMHLSPLKKQLPNTPTKQPPVTIEWSPVISPNSKQPLHKQIKESSPRRRIKKTSLLPPGELDNYWTGPDEDKIYTCTYKNCGKKFTRRYNVRSHIQTHLSDRPFGCQFCPKRFVRQHDLNRHVKGHIEARYSKCPCGKEFARLDALRKHQDRNICVGGNKNVISKPTKKKGTNNTQQQLLKTDTVVERIEKQLLQEDKSVTEEFLMLQ.

5 disordered regions span residues 166-195 (AINT…ALPD), 219-311 (EEEK…GNSY), 355-452 (YQKQ…IHQN), 474-497 (AEQP…QPEL), and 535-624 (NQNQ…PRRR). Polar residues-rich tracts occupy residues 183 to 193 (GSQTPTPTSAL), 227 to 254 (QRMM…PQTM), 302 to 311 (KSDSVGGNSY), and 355 to 371 (YQKQ…QNDS). Low complexity predominate over residues 372–395 (QQLEPLKTPQPQPKQQQQQQQPNN). The span at 420-431 (INGSPDWNSSPE) shows a compositional bias: polar residues. 2 stretches are compositionally biased toward low complexity: residues 483–497 (PHQQ…QPEL) and 535–544 (NQNQNQNQNQ). Residues 545 to 575 (TKTPYSQQSQFSPTHSNFNLSPAKQLNSNVG) show a composition bias toward polar residues. 2 C2H2-type zinc fingers span residues 649–673 (YTCT…IQTH) and 679–701 (FGCQ…VKGH).

It localises to the nucleus. Its function is as follows. Transcription factor involved in the RAM (regulation of ACE2 transcription factor and polarized morphogenesis) signaling network that regulates polarized morphogenesis. Regulates expression of genes involved in cell separation such as CHT3, DSE1, and SCW11; or other cell wall genes such as ASH1, DSE4, PIR1, PRY2, and RME1. Required for regulation of morphogenesis, cell separation, adherence, biofilm formation, invasion, as well as virulence in a mouse model of infection. This is Cell wall transcription factor ACE2 (ACE2) from Candida albicans (strain SC5314 / ATCC MYA-2876) (Yeast).